The primary structure comprises 434 residues: Serine hydroxymethyltransferase (434 aa).

(6S)-5,6,7,8-tetrahydrofolate-binding positions include L132 and 136-138; that span reads GHL. An N6-(pyridoxal phosphate)lysine modification is found at K241.

This sequence belongs to the SHMT family. As to quaternary structure, homodimer. Pyridoxal 5'-phosphate is required as a cofactor.

The protein localises to the cytoplasm. The catalysed reaction is (6R)-5,10-methylene-5,6,7,8-tetrahydrofolate + glycine + H2O = (6S)-5,6,7,8-tetrahydrofolate + L-serine. The protein operates within one-carbon metabolism; tetrahydrofolate interconversion. It functions in the pathway amino-acid biosynthesis; glycine biosynthesis; glycine from L-serine: step 1/1. Functionally, catalyzes the reversible interconversion of serine and glycine with tetrahydrofolate (THF) serving as the one-carbon carrier. This reaction serves as the major source of one-carbon groups required for the biosynthesis of purines, thymidylate, methionine, and other important biomolecules. Also exhibits THF-independent aldolase activity toward beta-hydroxyamino acids, producing glycine and aldehydes, via a retro-aldol mechanism. This Kineococcus radiotolerans (strain ATCC BAA-149 / DSM 14245 / SRS30216) protein is Serine hydroxymethyltransferase.